A 92-amino-acid chain; its full sequence is Acyl-CoA-binding protein (92 aa).

Residues Leu3–Ser88 form the ACB domain. Residues Tyr30–Lys34, Lys56, and Tyr75 each bind an acyl-CoA.

The protein belongs to the ACBP family.

In terms of biological role, binds medium- and long-chain acyl-CoA esters with very high affinity and may function as an intracellular carrier of acyl-CoA esters. This chain is Acyl-CoA-binding protein, found in Brassica napus (Rape).